The chain runs to 381 residues: L-lactate dehydrogenase (381 aa).

The FMN hydroxy acid dehydrogenase domain occupies 1 to 380; it reads MIISSASDYR…KPEALVDLSK (380 aa). Position 24 (tyrosine 24) interacts with substrate. FMN contacts are provided by serine 106 and glutamine 127. Tyrosine 129 lines the substrate pocket. An FMN-binding site is contributed by threonine 155. Arginine 164 lines the substrate pocket. An FMN-binding site is contributed by lysine 251. Histidine 275 functions as the Proton acceptor in the catalytic mechanism. Arginine 278 provides a ligand contact to substrate. 306–330 contributes to the FMN binding site; that stretch reads DSGIRNGLDIVRMLALGADATMLGR.

Belongs to the FMN-dependent alpha-hydroxy acid dehydrogenase family. Requires FMN as cofactor.

It is found in the cell inner membrane. The enzyme catalyses (S)-lactate + A = pyruvate + AH2. In terms of biological role, catalyzes the conversion of L-lactate to pyruvate. Is coupled to the respiratory chain. The chain is L-lactate dehydrogenase from Haemophilus influenzae (strain ATCC 51907 / DSM 11121 / KW20 / Rd).